The chain runs to 187 residues: PBAN-type neuropeptides (187 aa).

An N-terminal signal peptide occupies residues 1 to 22 (MSRFYFFFNLICLYLAIKSALS). A propeptide spanning residues 23–64 (AELDTNDQKYADLRTTGRGESPDSTGPDSDTLRRDDGAEGLN) is cleaved from the precursor. Over residues 34 to 43 (DLRTTGRGES) the composition is skewed to basic and acidic residues. Residues 34 to 58 (DLRTTGRGESPDSTGPDSDTLRRDD) form a disordered region. Residue L76 is modified to Leucine amide. The propeptide occupies 80–127 (TIAADLHDDLVEEFDAEPLGYAGEPPQKLATELVQGAPYMVLLVTAKP). The tract at residues 132–163 (PIFYHTTSPRLGRRDSVGENHQRPPFAPRLGR) is disordered. L142 bears the Leucine amide mark. Residues 143-153 (GRRDSVGENHQ) are compositionally biased toward basic and acidic residues. A leucine amide mark is found at L161 and L171. The propeptide occupies 174-187 (SYNGGYPLPFQFAY).

Belongs to the pyrokinin family.

It localises to the secreted. In terms of biological role, a hormone that controls sex pheromone production in females and pheromone responsiveness in male. Also mediates visceral muscle contractile activity (myotropic activity). This chain is PBAN-type neuropeptides, found in Anopheles gambiae (African malaria mosquito).